The primary structure comprises 556 residues: Polypeptide N-acetylgalactosaminyltransferase 13 (556 aa).

Residues 1–4 are Cytoplasmic-facing; it reads MRRF. A helical; Signal-anchor for type II membrane protein membrane pass occupies residues 5 to 27; sequence VYCKVVLATSLMWVLVDVFLLLY. Residues 28–556 are Lumenal-facing; it reads FSECNKCDDK…WLLRNMTLGT (529 aa). Residues asparagine 94 and asparagine 116 are each glycosylated (N-linked (GlcNAc...) asparagine). Intrachain disulfides connect cysteine 105-cysteine 338, cysteine 329-cysteine 407, cysteine 441-cysteine 458, cysteine 481-cysteine 496, and cysteine 522-cysteine 539. A catalytic subdomain A region spans residues 114 to 224; that stretch reads LPNTSVVIVF…LGWLEPLLAR (111 aa). 2 residues coordinate substrate: aspartate 155 and arginine 185. Mn(2+) contacts are provided by aspartate 208 and histidine 210. Residues 284–346 are catalytic subdomain B; sequence PVRTPTMAGG…TCSHVGHVFR (63 aa). Tryptophan 315 lines the substrate pocket. Histidine 343 is a binding site for Mn(2+). The substrate site is built by arginine 346 and tyrosine 351. The Ricin B-type lectin domain occupies 428 to 550; the sequence is YSLGEIRNVE…GSRSQQWLLR (123 aa). An N-linked (GlcNAc...) asparagine glycan is attached at asparagine 551.

It belongs to the glycosyltransferase 2 family. GalNAc-T subfamily. Requires Mn(2+) as cofactor. In terms of tissue distribution, specifically expressed in neuronal cells. Expressed in fetal brain, whole adult brain, cerebral cortex and cerebellum. Not expressed in other tissues tested.

The protein resides in the golgi apparatus membrane. The enzyme catalyses L-seryl-[protein] + UDP-N-acetyl-alpha-D-galactosamine = a 3-O-[N-acetyl-alpha-D-galactosaminyl]-L-seryl-[protein] + UDP + H(+). The catalysed reaction is L-threonyl-[protein] + UDP-N-acetyl-alpha-D-galactosamine = a 3-O-[N-acetyl-alpha-D-galactosaminyl]-L-threonyl-[protein] + UDP + H(+). It participates in protein modification; protein glycosylation. Its function is as follows. Catalyzes the initial reaction in O-linked oligosaccharide biosynthesis, the transfer of an N-acetyl-D-galactosamine (GalNAc) residue from UDP-GalNAc to a serine or threonine residue on the protein receptor. Generates GalNAc-O-Ser/Thr structure also known as Tn antigen, which itself is immunogenic but also serves as a precursor for the synthesis of different mucin-type O-glycan core structures. Contributes to the synthesis of O-linked glycans on mucins and proteoglycans of the central nervous system. May promote neurogenesis through glycosylation and stabilization of PDPN. Functionally, can glycosylate both unmodified peptides and glycopeptides that already contain an O-linked GalNAc sugar. Transfers GalNAc to Thr-/Ser-rich tandem repeats GTTPSPVPTTSTTSAP of MUC5AC, specifically on Thr-3 of non-glycosylated MUC5AC peptide, on Thr-12 and Thr-13 of preglycosylated MUC5AC at Thr-3 (MUC5AC-3), on Thr-3 of preglycosylated MUC5AC at Thr-13 (MUC5AC-13) and on Thr-12 of preglycosylated MUC5AC at Thr-3 and Thr-13 (MUC5AC-3,13). Transfers GalNAc to three consecutive serine/threonine residues on SDC3 forming a triplet-Tn epitope expressed in Purkinje cells of the developing brain. In terms of biological role, can glycosylate both unmodified peptides and glycopeptides that already contain an O-linked GalNAc sugar. Transfers GalNAc to Thr-/Ser-rich tandem repeats GTTPSPVPTTSTTSAP of MUC5AC, specifically on Thr-3 of non-glycosylated MUC5AC peptide, on Thr-12 and Thr-13 of preglycosylated MUC5AC at Thr-3 (MUC5AC-3), on Thr-3 of preglycosylated MUC5AC at Thr-13 (MUC5AC-13) and on Thr-12 of preglycosylated MUC5AC at Thr-3 and Thr-13 (MUC5AC-3,13). The protein is Polypeptide N-acetylgalactosaminyltransferase 13 (GALNT13) of Homo sapiens (Human).